The following is a 214-amino-acid chain: External core antigen (214 aa).

The signal sequence occupies residues 1–19; sequence MQLFHLCLIISCTCPTFQA. The tract at residues 25-27 is HBEAG; the sequence is GWL. The segment at 165 to 214 is disordered; it reads NAPILSTLPETTVVRRRDRGRSPRRRTPSPRRRRSQSPRRRRSQSRESQC. Basic residues predominate over residues 178-207; it reads VRRRDRGRSPRRRTPSPRRRRSQSPRRRRS. Residues 186-192 form a 1; half-length repeat; the sequence is SPRRRTP. The interval 186-208 is 3 X 8 AA repeats of S-P-R-R-R-R-S-Q; the sequence is SPRRRTPSPRRRRSQSPRRRRSQ. Positions 186–214 are excised as a propeptide; that stretch reads SPRRRTPSPRRRRSQSPRRRRSQSRESQC. Repeat copies occupy residues 193–200 and 201–208.

The protein belongs to the orthohepadnavirus precore antigen family. As to quaternary structure, homodimerizes. Post-translationally, phosphorylated. In terms of processing, cleaved by host furin.

It is found in the secreted. Its subcellular location is the host nucleus. May regulate immune response to the intracellular capsid in acting as a T-cell tolerogen, by having an immunoregulatory effect which prevents destruction of infected cells by cytotoxic T-cells. This immune regulation may predispose to chronicity during perinatal infections and prevent severe liver injury during adult infections. This chain is External core antigen, found in Homo sapiens (Human).